A 155-amino-acid polypeptide reads, in one-letter code: Protein-export protein SecB (155 aa).

Belongs to the SecB family. In terms of assembly, homotetramer, a dimer of dimers. One homotetramer interacts with 1 SecA dimer.

The protein localises to the cytoplasm. Its function is as follows. One of the proteins required for the normal export of preproteins out of the cell cytoplasm. It is a molecular chaperone that binds to a subset of precursor proteins, maintaining them in a translocation-competent state. It also specifically binds to its receptor SecA. The polypeptide is Protein-export protein SecB (Salmonella heidelberg (strain SL476)).